We begin with the raw amino-acid sequence, 750 residues long: Photosystem I P700 chlorophyll a apoprotein A1 (750 aa).

Helical transmembrane passes span 70–93 (VFSA…FHGA), 156–179 (LYCT…FHYH), 195–219 (LNHH…HVSL), 291–309 (IAHH…GHMY), 346–369 (WHAQ…HHMY), 385–411 (LSLF…IFMV), 433–455 (AIIS…LYIH), and 531–549 (FLVH…LILL). C573 and C582 together coordinate [4Fe-4S] cluster. The next 2 membrane-spanning stretches (helical) occupy residues 589–610 (HVFL…HFSW) and 664–686 (LSAY…MFLF). H675 lines the chlorophyll a' pocket. Residues M683 and Y691 each contribute to the chlorophyll a site. Residue W692 participates in phylloquinone binding. A helical transmembrane segment spans residues 724 to 744 (AVGVTHYLLGGIATTWAFFLA).

The protein belongs to the PsaA/PsaB family. As to quaternary structure, the PsaA/B heterodimer binds the P700 chlorophyll special pair and subsequent electron acceptors. PSI consists of a core antenna complex that captures photons, and an electron transfer chain that converts photonic excitation into a charge separation. The eukaryotic PSI reaction center is composed of at least 11 subunits. P700 is a chlorophyll a/chlorophyll a' dimer, A0 is one or more chlorophyll a, A1 is one or both phylloquinones and FX is a shared 4Fe-4S iron-sulfur center. is required as a cofactor.

Its subcellular location is the plastid. The protein resides in the chloroplast thylakoid membrane. It catalyses the reaction reduced [plastocyanin] + hnu + oxidized [2Fe-2S]-[ferredoxin] = oxidized [plastocyanin] + reduced [2Fe-2S]-[ferredoxin]. PsaA and PsaB bind P700, the primary electron donor of photosystem I (PSI), as well as the electron acceptors A0, A1 and FX. PSI is a plastocyanin-ferredoxin oxidoreductase, converting photonic excitation into a charge separation, which transfers an electron from the donor P700 chlorophyll pair to the spectroscopically characterized acceptors A0, A1, FX, FA and FB in turn. Oxidized P700 is reduced on the lumenal side of the thylakoid membrane by plastocyanin. The sequence is that of Photosystem I P700 chlorophyll a apoprotein A1 from Jasminum nudiflorum (Winter jasmine).